A 585-amino-acid polypeptide reads, in one-letter code: Putative sulfur deprivation response regulator (585 aa).

5 helical membrane-spanning segments follow: residues 5–25 (VVDA…RGII), 30–50 (AFAG…MIAA), 83–103 (VASV…IPVV), 117–137 (FMMP…IGTS), and 162–182 (IIGL…SPLL). 2 consecutive RCK C-terminal domains span residues 189-274 (MMAA…LPGL) and 288-372 (ETVA…STEW). 5 helical membrane-spanning segments follow: residues 389–409 (LALF…SMDV), 411–431 (PLST…VLTV), 442–462 (ILLT…TGLA), 482–502 (VAAI…GAAV), and 561–581 (FGLP…VLYF).

It belongs to the CitM (TC 2.A.11) transporter family.

The protein resides in the membrane. Not known; mutations in SAC1 produces cells that cannot synthesize arylsulfatase and cannot take up sulfate as rapidly as wild-type cells. SAC1 is necessary for cells to survive sulfur deprivation. This chain is Putative sulfur deprivation response regulator (SAC1), found in Chlamydomonas reinhardtii (Chlamydomonas smithii).